The chain runs to 303 residues: Zinc import ATP-binding protein ZnuC (303 aa).

Positions 17-232 constitute an ABC transporter domain; that stretch reads VSLENVGVLR…PEYVRLFGSR (216 aa). Position 49 to 56 (49 to 56) interacts with ATP; that stretch reads GPNGSGKS. The disordered stretch occupies residues 263–303; the sequence is DHCHPDDGHHAHEHGHAGHEHDHDHPDHAHPHAHEAGERHA.

It belongs to the ABC transporter superfamily. Zinc importer (TC 3.A.1.15.5) family. As to quaternary structure, the complex is composed of two ATP-binding proteins (ZnuC), two transmembrane proteins (ZnuB) and a solute-binding protein (ZnuA).

It is found in the cell inner membrane. The enzyme catalyses Zn(2+)(out) + ATP(in) + H2O(in) = Zn(2+)(in) + ADP(in) + phosphate(in) + H(+)(in). Part of the ABC transporter complex ZnuABC involved in zinc import. Responsible for energy coupling to the transport system. The protein is Zinc import ATP-binding protein ZnuC of Rhizobium johnstonii (strain DSM 114642 / LMG 32736 / 3841) (Rhizobium leguminosarum bv. viciae).